A 238-amino-acid chain; its full sequence is Phosphoribosylaminoimidazole-succinocarboxamide synthase (238 aa).

The protein belongs to the SAICAR synthetase family.

The catalysed reaction is 5-amino-1-(5-phospho-D-ribosyl)imidazole-4-carboxylate + L-aspartate + ATP = (2S)-2-[5-amino-1-(5-phospho-beta-D-ribosyl)imidazole-4-carboxamido]succinate + ADP + phosphate + 2 H(+). The protein operates within purine metabolism; IMP biosynthesis via de novo pathway; 5-amino-1-(5-phospho-D-ribosyl)imidazole-4-carboxamide from 5-amino-1-(5-phospho-D-ribosyl)imidazole-4-carboxylate: step 1/2. This Chlorobium phaeovibrioides (strain DSM 265 / 1930) (Prosthecochloris vibrioformis (strain DSM 265)) protein is Phosphoribosylaminoimidazole-succinocarboxamide synthase.